Consider the following 546-residue polypeptide: Protein FAM124A (546 aa).

Disordered regions lie at residues 1 to 37 (MDPK…SELS), 285 to 361 (KFPK…QRSK), and 488 to 546 (SSSS…EFYI). Residues 24-36 (SDYSHLSSTSSEL) show a composition bias toward low complexity. Residues 285 to 302 (KFPKPGRVHHSSEKKRHS) are compositionally biased toward basic residues. 2 stretches are compositionally biased toward polar residues: residues 304-324 (PLPS…SPLN) and 347-361 (ANST…QRSK). Low complexity predominate over residues 488-511 (SSSSATARAAPPAPSTSTLTDSSP).

This sequence belongs to the FAM124 family.

This chain is Protein FAM124A (FAM124A), found in Pongo abelii (Sumatran orangutan).